A 1171-amino-acid chain; its full sequence is ATP-dependent helicase/deoxyribonuclease subunit B (1171 aa).

In terms of domain architecture, UvrD-like helicase ATP-binding spans 1–301 (MSLRFVIGRA…AHLEMHYEAR (301 aa)). 8–15 (GRAGSGKS) is a binding site for ATP. One can recognise a UvrD-like helicase C-terminal domain in the interval 281–587 (MKQPRFHSQA…QFANIPPSLD (307 aa)). Residues cysteine 805, cysteine 1129, cysteine 1132, and cysteine 1138 each coordinate [4Fe-4S] cluster.

The protein belongs to the helicase family. AddB/RexB type 1 subfamily. As to quaternary structure, heterodimer of AddA and AddB. Mg(2+) serves as cofactor. It depends on [4Fe-4S] cluster as a cofactor.

Functionally, the heterodimer acts as both an ATP-dependent DNA helicase and an ATP-dependent, dual-direction single-stranded exonuclease. Recognizes the chi site generating a DNA molecule suitable for the initiation of homologous recombination. The AddB subunit has 5' -&gt; 3' nuclease activity but not helicase activity. This is ATP-dependent helicase/deoxyribonuclease subunit B from Bacillus mycoides (strain KBAB4) (Bacillus weihenstephanensis).